The sequence spans 164 residues: Nucleotide-binding protein Helmi_22490 (164 aa).

The protein belongs to the YajQ family.

In terms of biological role, nucleotide-binding protein. In Heliobacterium modesticaldum (strain ATCC 51547 / Ice1), this protein is Nucleotide-binding protein Helmi_22490.